The sequence spans 179 residues: DNA utilization protein HofN (179 aa).

The chain crosses the membrane as a helical span at residues Leu19–Ile39.

It is found in the cell inner membrane. Its function is as follows. Required for the use of extracellular DNA as a nutrient. The polypeptide is DNA utilization protein HofN (hofN) (Escherichia coli (strain K12)).